A 4144-amino-acid polypeptide reads, in one-letter code: DNA-dependent protein kinase catalytic subunit (4144 aa).

N6-acetyllysine is present on K127. Residues 298–333 form an HEAT 1 repeat; the sequence is DNYVSLFEVLSKWCSHTNVEMKKAAHSALESFLKQV. Phosphoserine is present on residues S521, S851, and S903. An HEAT 2 repeat occupies 1014–1050; the sequence is QDTVALLETILDGIVDPVDSTLRDFCGRCIREFLKWS. S1075 is subject to Phosphoserine. K1219 is modified (N6-acetyllysine). The interval 1516–1551 is interaction with C1D; that stretch reads LDPSCKRLASGLLELAFAFGGLCEHLVDLLLDTAVL. The segment at 1516–1551 is leucine-zipper; that stretch reads LDPSCKRLASGLLELAFAFGGLCEHLVDLLLDTAVL. Residues 1736 to 1769 form a TPR 1 repeat; the sequence is PMKSEEFPVGTLRYSNYVDCMKKFLDALELSQSP. K1983 is modified (N6-acetyllysine). S2069 is subject to Phosphoserine; by autocatalysis. An N6-acetyllysine modification is found at K2271. The tract at residues 2448–3228 is KIP-binding; it reads LDIIYKMMAK…DHSLSMDEER (781 aa). T2547 carries the phosphothreonine modification. Position 2621 is a phosphothreonine; by autocatalysis (T2621). The residue at position 2624 (S2624) is a Phosphoserine; by autocatalysis. T2650 and T2659 each carry phosphothreonine; by autocatalysis. Positions 2697-2729 are disordered; that stretch reads AQKRNEKSQRAPLKSVGPDFGEKKLGLPGDKVD. Basic and acidic residues predominate over residues 2716–2729; that stretch reads FGEKKLGLPGDKVD. The segment at 2753–2781 is may split the end of the DNA molecule, with the two strands separating around the region; it reads EKLSLIYARKGIAEQKREKEIKSELKMKH. The residue at position 2805 (S2805) is a Phosphoserine. 3 TPR repeats span residues 2903 to 2935, 2936 to 2964, and 2965 to 2998; these read PVGV…VSPD, VVRW…SEIG, and TKQI…EEWV. The 634-residue stretch at 2922 to 3555 folds into the FAT domain; that stretch reads PAKQFKGRMR…VYPFIISSES (634 aa). A Phosphoserine modification is found at S3221. 4 positions are modified to N6-acetyllysine: K3257, K3276, K3654, and K3658. A TPR 5 repeat occupies 3711 to 3748; it reads LRNELEIPGQYDGKGKPLPEYHARIAGFDERIKVMASI. The PI3K/PI4K catalytic domain maps to 3738–4069; sequence FDERIKVMAS…IHYAKRKLAG (332 aa). Positions 3744 to 3750 are G-loop; sequence VMASIRK. Residues S3747 and S3837 each carry the phosphoserine modification. The segment at 3935–3943 is catalytic loop; that stretch reads GIGDRHLNN. Residues 3955 to 3980 form an activation loop region; the sequence is GIDFGHAFGSATQFLPVPELMPFRLT. S4042 is modified (phosphoserine). The 33-residue stretch at 4112 to 4144 folds into the FATC domain; sequence NGLSEEAQVKCLIDQATDPNILGRTWIGWEPWM.

This sequence belongs to the PI3/PI4-kinase family. As to quaternary structure, DNA-PK is a heterotrimer of PRKDC and the Ku dimer (composed of XRCC6/Ku70 and XRCC5/Ku86). Formation of this complex may be promoted by interaction with ILF3. Component of the core long-range non-homologous end joining (NHEJ) complex (also named DNA-PK complex) composed of PRKDC, LIG4, XRCC4, XRCC6/Ku70, XRCC5/Ku86 and NHEJ1/XLF. Additional component of the NHEJ complex includes PAXX. Following autophosphorylation, PRKDC dissociates from DNA. Interacts with DNA-PKcs-interacting protein (KIP) with the region upstream the kinase domain. PRKDC alone also interacts with and phosphorylates DCLRE1C, thereby activating the latent endonuclease activity of this protein. Interacts with C1D. Interacts with TTI1 and TELO2. Interacts with CIB1. Interacts with SETX. Interacts with NR4A3; the DNA-dependent protein kinase complex DNA-PK phosphorylates and activates NR4A3 and prevents NR4A3 ubiquitination and degradation. Interacts with BRAT1. Part of the HDP-RNP complex composed of at least HEXIM1, PRKDC, XRCC5, XRCC6, paraspeckle proteins (SFPQ, NONO, PSPC1, RBM14, and MATR3) and NEAT1 RNA. Interacts with KAT5. Post-translationally, autophosphorylated at two clusters, the T2609 cluster and the S2056 cluster. Autophosphorylated on Ser-2069, Thr-2621, Thr-2650 and Thr-2659. Ser-2069 and Thr-2621 are DNA damage-inducible phosphorylation sites (inducible with ionizing radiation, IR) dephosphorylated by PPP5C. Autophosphorylation induces a conformational change that leads to remodeling of the DNA-PK complex, requisite for efficient end processing and DNA repair. Autophosphorylation in trans within DNA-PK complexes loaded on DNA ends leads to the dissociation of PRKDC from DNA and the transition into the short-range NHEJ complex. Autophosphorylation of the T2609 cluster is required for hematopoietic development and protein synthesis in erythrocytes precursors. In terms of processing, S-nitrosylated by GAPDH. Polyubiquitinated by RNF144A, leading to proteasomal degradation.

It localises to the nucleus. The protein resides in the nucleolus. The protein localises to the cytoplasm. It is found in the cytosol. The enzyme catalyses L-seryl-[protein] + ATP = O-phospho-L-seryl-[protein] + ADP + H(+). The catalysed reaction is L-threonyl-[protein] + ATP = O-phospho-L-threonyl-[protein] + ADP + H(+). Activity seems to be attenuated by autophosphorylation. Binding to the SL1 region of U3 small nucleolar RNA promotes auto-phosphorylation activity. Inhibited by wortmannin. Serine/threonine-protein kinase that acts as a molecular sensor for DNA damage. Involved in DNA non-homologous end joining (NHEJ) required for double-strand break (DSB) repair and V(D)J recombination. Must be bound to DNA to express its catalytic properties. Promotes processing of hairpin DNA structures in V(D)J recombination by activation of the hairpin endonuclease artemis (DCLRE1C). Recruited by XRCC5 and XRCC6 to DNA ends and is required to (1) protect and align broken ends of DNA, thereby preventing their degradation, (2) and sequester the DSB for repair by NHEJ. Acts as a scaffold protein to aid the localization of DNA repair proteins to the site of damage. The assembly of the DNA-PK complex at DNA ends is also required for the NHEJ ligation step. Found at the ends of chromosomes, suggesting a further role in the maintenance of telomeric stability and the prevention of chromosomal end fusion. Also involved in modulation of transcription. As part of the DNA-PK complex, involved in the early steps of ribosome assembly by promoting the processing of precursor rRNA into mature 18S rRNA in the small-subunit processome. Binding to U3 small nucleolar RNA, recruits PRKDC and XRCC5/Ku86 to the small-subunit processome. Recognizes the substrate consensus sequence [ST]-Q. Phosphorylates 'Ser-139' of histone variant H2AX, thereby regulating DNA damage response mechanism. Phosphorylates ASF1A, DCLRE1C, c-Abl/ABL1, histone H1, HSPCA, c-jun/JUN, p53/TP53, PARP1, POU2F1, DHX9, FH, SRF, NHEJ1/XLF, XRCC1, XRCC4, XRCC5, XRCC6, WRN, MYC and RFA2. Can phosphorylate C1D not only in the presence of linear DNA but also in the presence of supercoiled DNA. Ability to phosphorylate p53/TP53 in the presence of supercoiled DNA is dependent on C1D. Acts as a regulator of the phosphatidylinositol 3-kinase/protein kinase B signal transduction by mediating phosphorylation of 'Ser-473' of protein kinase B (PKB/AKT1, PKB/AKT2, PKB/AKT3), promoting their activation. Contributes to the determination of the circadian period length by antagonizing phosphorylation of CRY1 'Ser-588' and increasing CRY1 protein stability, most likely through an indirect mechanism. Plays a role in the regulation of DNA virus-mediated innate immune response by assembling into the HDP-RNP complex, a complex that serves as a platform for IRF3 phosphorylation and subsequent innate immune response activation through the cGAS-STING pathway. Also regulates the cGAS-STING pathway by catalyzing phosphorylation of CGAS, thereby impairing CGAS oligomerization and activation. Also regulates the cGAS-STING pathway by mediating phosphorylation of PARP1. The chain is DNA-dependent protein kinase catalytic subunit (PRKDC) from Canis lupus familiaris (Dog).